The following is a 412-amino-acid chain: uncharacterized protein (412 aa).

His49 contributes to the Zn(2+) binding site. Glu52 acts as the Proton acceptor in catalysis. Zn(2+)-binding residues include His53 and Glu129.

The protein belongs to the peptidase M16 family. It depends on Zn(2+) as a cofactor.

This is an uncharacterized protein from Rickettsia bellii (strain RML369-C).